The following is a 435-amino-acid chain: Glutamyl-tRNA reductase (435 aa).

Residues 49 to 52 (TCNR), Ser109, 114 to 116 (ETQ), and Gln120 each bind substrate. The Nucleophile role is filled by Cys50. 189 to 194 (GAGEMS) contributes to the NADP(+) binding site.

This sequence belongs to the glutamyl-tRNA reductase family. In terms of assembly, homodimer.

It catalyses the reaction (S)-4-amino-5-oxopentanoate + tRNA(Glu) + NADP(+) = L-glutamyl-tRNA(Glu) + NADPH + H(+). It functions in the pathway porphyrin-containing compound metabolism; protoporphyrin-IX biosynthesis; 5-aminolevulinate from L-glutamyl-tRNA(Glu): step 1/2. In terms of biological role, catalyzes the NADPH-dependent reduction of glutamyl-tRNA(Glu) to glutamate 1-semialdehyde (GSA). This is Glutamyl-tRNA reductase from Listeria monocytogenes serotype 4a (strain HCC23).